A 255-amino-acid chain; its full sequence is Putative oxidoreductase YtkK (255 aa).

NAD(+) is bound at residue 7–14; it reads TAGSKGLG.

This sequence belongs to the short-chain dehydrogenases/reductases (SDR) family.

In Bacillus subtilis (strain 168), this protein is Putative oxidoreductase YtkK (ytkK).